The following is a 310-amino-acid chain: ADP-L-glycero-D-manno-heptose-6-epimerase (310 aa).

Residues 10 to 11 (FI), 31 to 32 (DN), Lys38, Lys53, 75 to 79 (EGACS), and Asn92 each bind NADP(+). Tyr140 serves as the catalytic Proton acceptor. Lys144 contributes to the NADP(+) binding site. Position 169 (Asn169) interacts with substrate. Residues Val170 and Lys178 each coordinate NADP(+). The active-site Proton acceptor is Lys178. Residues Ser180, His187, 201–204 (FEGS), and Arg209 each bind substrate. Lys267 bears the N6-acetyllysine mark. Residue Tyr272 participates in substrate binding.

The protein belongs to the NAD(P)-dependent epimerase/dehydratase family. HldD subfamily. In terms of assembly, homopentamer. NADP(+) serves as cofactor.

The enzyme catalyses ADP-D-glycero-beta-D-manno-heptose = ADP-L-glycero-beta-D-manno-heptose. Its pathway is nucleotide-sugar biosynthesis; ADP-L-glycero-beta-D-manno-heptose biosynthesis; ADP-L-glycero-beta-D-manno-heptose from D-glycero-beta-D-manno-heptose 7-phosphate: step 4/4. Catalyzes the interconversion between ADP-D-glycero-beta-D-manno-heptose and ADP-L-glycero-beta-D-manno-heptose via an epimerization at carbon 6 of the heptose. In Escherichia coli (strain SMS-3-5 / SECEC), this protein is ADP-L-glycero-D-manno-heptose-6-epimerase.